The chain runs to 152 residues: UPF0311 protein blr7842 (152 aa).

The protein belongs to the UPF0311 family.

The chain is UPF0311 protein blr7842 from Bradyrhizobium diazoefficiens (strain JCM 10833 / BCRC 13528 / IAM 13628 / NBRC 14792 / USDA 110).